Here is a 367-residue protein sequence, read N- to C-terminus: sn-glycerol-3-phosphate import ATP-binding protein UgpC (367 aa).

The region spanning 4-235 (LSLRNVQKTY…PASTFVAGFI (232 aa)) is the ABC transporter domain. 37-44 (GPSGCGKS) contacts ATP.

The protein belongs to the ABC transporter superfamily. sn-glycerol-3-phosphate importer (TC 3.A.1.1.3) family. In terms of assembly, the complex is composed of two ATP-binding proteins (UgpC), two transmembrane proteins (UgpA and UgpE) and a solute-binding protein (UgpB).

The protein resides in the cell inner membrane. The catalysed reaction is sn-glycerol 3-phosphate(out) + ATP + H2O = sn-glycerol 3-phosphate(in) + ADP + phosphate + H(+). Functionally, part of the ABC transporter complex UgpBAEC involved in sn-glycerol-3-phosphate (G3P) import. Responsible for energy coupling to the transport system. The protein is sn-glycerol-3-phosphate import ATP-binding protein UgpC of Cupriavidus metallidurans (strain ATCC 43123 / DSM 2839 / NBRC 102507 / CH34) (Ralstonia metallidurans).